The sequence spans 189 residues: Glucose-6-phosphate isomerase (189 aa).

Fe cation is bound by residues His88, His90, Glu97, and His136.

It belongs to the archaeal-type GPI family. Homodimer.

The protein resides in the cytoplasm. The catalysed reaction is alpha-D-glucose 6-phosphate = beta-D-fructose 6-phosphate. It participates in carbohydrate degradation; glycolysis; D-glyceraldehyde 3-phosphate and glycerone phosphate from D-glucose: step 2/4. This chain is Glucose-6-phosphate isomerase, found in Thermococcus kodakarensis (strain ATCC BAA-918 / JCM 12380 / KOD1) (Pyrococcus kodakaraensis (strain KOD1)).